A 443-amino-acid chain; its full sequence is 3-phosphoshikimate 1-carboxyvinyltransferase (443 aa).

3-phosphoshikimate contacts are provided by Lys-24, Ser-25, and Arg-29. Lys-24 is a binding site for phosphoenolpyruvate. The phosphoenolpyruvate site is built by Gly-95 and Arg-123. 4 residues coordinate 3-phosphoshikimate: Ser-167, Gln-169, Asp-323, and Lys-350. Residue Gln-169 participates in phosphoenolpyruvate binding. Asp-323 functions as the Proton acceptor in the catalytic mechanism. Phosphoenolpyruvate-binding residues include Arg-354 and Arg-398.

Belongs to the EPSP synthase family. Monomer.

The protein resides in the cytoplasm. It catalyses the reaction 3-phosphoshikimate + phosphoenolpyruvate = 5-O-(1-carboxyvinyl)-3-phosphoshikimate + phosphate. It functions in the pathway metabolic intermediate biosynthesis; chorismate biosynthesis; chorismate from D-erythrose 4-phosphate and phosphoenolpyruvate: step 6/7. Its function is as follows. Catalyzes the transfer of the enolpyruvyl moiety of phosphoenolpyruvate (PEP) to the 5-hydroxyl of shikimate-3-phosphate (S3P) to produce enolpyruvyl shikimate-3-phosphate and inorganic phosphate. The chain is 3-phosphoshikimate 1-carboxyvinyltransferase from Caulobacter vibrioides (strain ATCC 19089 / CIP 103742 / CB 15) (Caulobacter crescentus).